A 489-amino-acid polypeptide reads, in one-letter code: tRNA(Ile)-lysidine synthase (489 aa).

35 to 40 (SGGLDS) serves as a coordination point for ATP.

This sequence belongs to the tRNA(Ile)-lysidine synthase family.

It localises to the cytoplasm. It catalyses the reaction cytidine(34) in tRNA(Ile2) + L-lysine + ATP = lysidine(34) in tRNA(Ile2) + AMP + diphosphate + H(+). In terms of biological role, ligates lysine onto the cytidine present at position 34 of the AUA codon-specific tRNA(Ile) that contains the anticodon CAU, in an ATP-dependent manner. Cytidine is converted to lysidine, thus changing the amino acid specificity of the tRNA from methionine to isoleucine. The sequence is that of tRNA(Ile)-lysidine synthase from Burkholderia mallei (strain ATCC 23344).